We begin with the raw amino-acid sequence, 519 residues long: uncharacterized protein (519 aa).

Helical transmembrane passes span 37–57 (ISMS…AQLM), 82–102 (GQLS…ILIA), 114–134 (MFVL…FSYY), 146–166 (ALTG…LGRV), 175–195 (LIFA…SVFS), 209–229 (WTTA…IPHI), 240–260 (FDYL…FSWN), 269–289 (VPYV…FVLV), 309–329 (CVLI…YYLW), 337–357 (FATP…GCAA), 373–393 (IMVV…TAPI), 402–422 (FVSI…ATLM), 434–454 (IAAS…LGIA), and 475–495 (AWYM…LTVF).

Belongs to the major facilitator superfamily.

It is found in the endoplasmic reticulum. The protein localises to the membrane. This is an uncharacterized protein from Schizosaccharomyces pombe (strain 972 / ATCC 24843) (Fission yeast).